The following is a 953-amino-acid chain: Isoleucine--tRNA ligase (953 aa).

The 'HIGH' region signature appears at 57–67 (PYANGDIHIGH). L-isoleucyl-5'-AMP is bound at residue Glu582. The 'KMSKS' region signature appears at 623–627 (KMSKS). An ATP-binding site is contributed by Lys626. The Zn(2+) site is built by Cys916, Cys919, Cys936, and Cys939.

Belongs to the class-I aminoacyl-tRNA synthetase family. IleS type 1 subfamily. Monomer. It depends on Zn(2+) as a cofactor.

It is found in the cytoplasm. It catalyses the reaction tRNA(Ile) + L-isoleucine + ATP = L-isoleucyl-tRNA(Ile) + AMP + diphosphate. Functionally, catalyzes the attachment of isoleucine to tRNA(Ile). As IleRS can inadvertently accommodate and process structurally similar amino acids such as valine, to avoid such errors it has two additional distinct tRNA(Ile)-dependent editing activities. One activity is designated as 'pretransfer' editing and involves the hydrolysis of activated Val-AMP. The other activity is designated 'posttransfer' editing and involves deacylation of mischarged Val-tRNA(Ile). This is Isoleucine--tRNA ligase from Bordetella bronchiseptica (strain ATCC BAA-588 / NCTC 13252 / RB50) (Alcaligenes bronchisepticus).